The sequence spans 559 residues: Beta-glucuronidase (559 aa).

The N-terminal stretch at M1–A19 is a signal peptide. Residues N53, N91, N99, and N143 are each glycosylated (N-linked (GlcNAc...) asparagine). E194 serves as the catalytic Proton donor. N-linked (GlcNAc...) asparagine glycosylation is found at N203, N222, and N280. Residue E312 is the Nucleophile of the active site. N-linked (GlcNAc...) asparagine glycans are attached at residues N427, N440, N465, N491, and N520.

The protein belongs to the glycosyl hydrolase 79 family.

The protein resides in the secreted. It catalyses the reaction a beta-D-glucuronoside + H2O = D-glucuronate + an alcohol. Functionally, beta-glucuronidase that hydrolyzes beta-glucuronosyl and 4-O-methyl-beta-glucuronosyl residues of arabinogalactan-protein. Hydrolyzed heparan sulfate only very weakly. Has no activity on xylan from birchwood. Able to catalyze the transglycosylation of glucuronic acid (GlcA) residues from p-nitrophenyl-beta-glucuronic acid (PNP beta-GlcA) to various monosaccharide acceptors such as glucose, galactose and xylose. In Neurospora crassa (strain ATCC 24698 / 74-OR23-1A / CBS 708.71 / DSM 1257 / FGSC 987), this protein is Beta-glucuronidase.